The chain runs to 150 residues: MGVPKKYALVSGTGEADTSLAAFDAALIDAGIGDCNLVELSSILPPNAEEDDLPEFPPGSIVPAVVAKAVGRGLVSSCICVGRLESGLGIVSERAATDSVETVRRLAKRDVEEMARLRGEKLVEVRTVTASTEPEDAEWAAAVAAVVFWG.

S42 is modified (pyruvic acid (Ser)).

It belongs to the PdaD family. It depends on pyruvate as a cofactor.

It catalyses the reaction L-arginine + H(+) = agmatine + CO2. This chain is Pyruvoyl-dependent arginine decarboxylase, found in Methanopyrus kandleri (strain AV19 / DSM 6324 / JCM 9639 / NBRC 100938).